The sequence spans 371 residues: Phosphate acyltransferase (371 aa).

Belongs to the PlsX family. In terms of assembly, homodimer. Probably interacts with PlsY.

The protein localises to the cytoplasm. It catalyses the reaction a fatty acyl-[ACP] + phosphate = an acyl phosphate + holo-[ACP]. Its pathway is lipid metabolism; phospholipid metabolism. Its function is as follows. Catalyzes the reversible formation of acyl-phosphate (acyl-PO(4)) from acyl-[acyl-carrier-protein] (acyl-ACP). This enzyme utilizes acyl-ACP as fatty acyl donor, but not acyl-CoA. This is Phosphate acyltransferase from Polaromonas sp. (strain JS666 / ATCC BAA-500).